Reading from the N-terminus, the 439-residue chain is Serine/threonine-protein kinase 2 (439 aa).

Residues 87 to 439 enclose the Protein kinase domain; sequence NDDFYHISTG…IFSDWINGGN (353 aa). ATP contacts are provided by residues 93-101 and K117; that span reads ISTGGYGIV. D307 (proton acceptor) is an active-site residue.

It belongs to the protein kinase superfamily. Ser/Thr protein kinase family. In terms of processing, phosphorylated in vivo. Autophosphorylated in vitro.

It is found in the host endoplasmic reticulum. The protein resides in the host endoplasmic reticulum-Golgi intermediate compartment. The catalysed reaction is L-seryl-[protein] + ATP = O-phospho-L-seryl-[protein] + ADP + H(+). It catalyses the reaction L-threonyl-[protein] + ATP = O-phospho-L-threonyl-[protein] + ADP + H(+). Its function is as follows. Essential serine-protein kinase involved in the early stage of virion morphogenesis. In Bos taurus (Bovine), this protein is Serine/threonine-protein kinase 2 (OPG054).